Reading from the N-terminus, the 500-residue chain is Cytochrome P450 71B34 (500 aa).

Residues 1-21 (MTNIWLLSLIFVICILVAVFN) traverse the membrane as a helical segment. Cysteine 440 contributes to the heme binding site.

This sequence belongs to the cytochrome P450 family. Requires heme as cofactor.

The protein localises to the membrane. In Arabidopsis thaliana (Mouse-ear cress), this protein is Cytochrome P450 71B34 (CYP71B34).